The chain runs to 349 residues: UDP-3-O-acylglucosamine N-acyltransferase (349 aa).

Residue histidine 246 is the Proton acceptor of the active site.

It belongs to the transferase hexapeptide repeat family. LpxD subfamily. Homotrimer.

The catalysed reaction is a UDP-3-O-[(3R)-3-hydroxyacyl]-alpha-D-glucosamine + a (3R)-hydroxyacyl-[ACP] = a UDP-2-N,3-O-bis[(3R)-3-hydroxyacyl]-alpha-D-glucosamine + holo-[ACP] + H(+). It participates in bacterial outer membrane biogenesis; LPS lipid A biosynthesis. Its function is as follows. Catalyzes the N-acylation of UDP-3-O-acylglucosamine using 3-hydroxyacyl-ACP as the acyl donor. Is involved in the biosynthesis of lipid A, a phosphorylated glycolipid that anchors the lipopolysaccharide to the outer membrane of the cell. The protein is UDP-3-O-acylglucosamine N-acyltransferase of Nostoc sp. (strain PCC 7120 / SAG 25.82 / UTEX 2576).